The chain runs to 36 residues: uncharacterized protein (36 aa).

The span at 1–14 (MNQLGSGPTKQGVA) shows a compositional bias: polar residues. A disordered region spans residues 1 to 36 (MNQLGSGPTKQGVATNTGSTGTTKNNSNLSGKGWVL). A compositionally biased stretch (low complexity) spans 15–36 (TNTGSTGTTKNNSNLSGKGWVL).

This is an uncharacterized protein from Dictyostelium discoideum (Social amoeba).